A 90-amino-acid chain; its full sequence is DNA-binding protein HU-alpha (90 aa).

This sequence belongs to the bacterial histone-like protein family. As to quaternary structure, heterodimer of an alpha and a beta chain.

Histone-like DNA-binding protein which is capable of wrapping DNA to stabilize it, and thus to prevent its denaturation under extreme environmental conditions. This is DNA-binding protein HU-alpha (hupA) from Vibrio proteolyticus (Aeromonas proteolytica).